Consider the following 362-residue polypeptide: 3-dehydroquinate synthase (362 aa).

Residues 71-76 (DGEQYK), 105-109 (GVIGD), 129-130 (TT), lysine 142, lysine 151, and 169-172 (CLKT) contribute to the NAD(+) site. Zn(2+) contacts are provided by glutamate 184, histidine 247, and histidine 264.

The protein belongs to the sugar phosphate cyclases superfamily. Dehydroquinate synthase family. Co(2+) is required as a cofactor. Zn(2+) serves as cofactor. It depends on NAD(+) as a cofactor.

It localises to the cytoplasm. The catalysed reaction is 7-phospho-2-dehydro-3-deoxy-D-arabino-heptonate = 3-dehydroquinate + phosphate. It functions in the pathway metabolic intermediate biosynthesis; chorismate biosynthesis; chorismate from D-erythrose 4-phosphate and phosphoenolpyruvate: step 2/7. Its function is as follows. Catalyzes the conversion of 3-deoxy-D-arabino-heptulosonate 7-phosphate (DAHP) to dehydroquinate (DHQ). The sequence is that of 3-dehydroquinate synthase from Salmonella enteritidis PT4 (strain P125109).